We begin with the raw amino-acid sequence, 73 residues long: DNA-directed RNA polymerase subunit omega (73 aa).

The protein belongs to the RNA polymerase subunit omega family. The RNAP catalytic core consists of 2 alpha, 1 beta, 1 beta' and 1 omega subunit. When a sigma factor is associated with the core the holoenzyme is formed, which can initiate transcription.

It carries out the reaction RNA(n) + a ribonucleoside 5'-triphosphate = RNA(n+1) + diphosphate. Promotes RNA polymerase assembly. Latches the N- and C-terminal regions of the beta' subunit thereby facilitating its interaction with the beta and alpha subunits. In Clostridium novyi (strain NT), this protein is DNA-directed RNA polymerase subunit omega.